The following is a 269-amino-acid chain: Glutamate racemase (269 aa).

Residues 14–15 and 46–47 contribute to the substrate site; these read DS and YS. Cysteine 78 serves as the catalytic Proton donor/acceptor. 79–80 provides a ligand contact to substrate; that stretch reads NT. The Proton donor/acceptor role is filled by cysteine 189. Substrate is bound at residue 190–191; that stretch reads TH.

It belongs to the aspartate/glutamate racemases family.

The catalysed reaction is L-glutamate = D-glutamate. The protein operates within cell wall biogenesis; peptidoglycan biosynthesis. Its function is as follows. Provides the (R)-glutamate required for cell wall biosynthesis. The polypeptide is Glutamate racemase (Haemophilus influenzae (strain ATCC 51907 / DSM 11121 / KW20 / Rd)).